Here is a 232-residue protein sequence, read N- to C-terminus: Modulator of macroautophagy TMEM150B (232 aa).

Over 1–6 (MWAWAL) the chain is Cytoplasmic. Residues 7–27 (LPVFLAVFGTVGLWAVYAIAV) form a helical membrane-spanning segment. Residues 28-50 (SNNSVNITIEFPYISTCGAYTPQ) are Extracellular-facing. Residues Asn29 and Asn33 are each glycosylated (N-linked (GlcNAc...) asparagine). Residues 51-71 (SCLFAQICNICCVLALWIVVI) traverse the membrane as a helical segment. Residues 72–83 (RFQQIRDLGRSS) lie on the Cytoplasmic side of the membrane. A helical transmembrane segment spans residues 84-104 (HLNTAGLVLGFISSIGISILG). Over 105 to 115 (NFQQTIIQEVH) the chain is Extracellular. Residues 116-136 (LLGALMAFFLGLAYFWIQAFI) traverse the membrane as a helical segment. Residues 137–153 (TYFSPPSRDNKWLVPVR) lie on the Cytoplasmic side of the membrane. Residues 154–174 (FVLCSQCTCMVICMFVLHSTG) traverse the membrane as a helical segment. The Extracellular portion of the chain corresponds to 175 to 177 (FRS). The chain crosses the membrane as a helical span at residues 178–198 (AAAICEWILVMCFFALFGVFA). The Cytoplasmic segment spans residues 199–232 (AEFRHIDFHKLTVQKEGLKVANNDNVVWTVQDVQ).

Belongs to the DRAM/TMEM150 family.

It is found in the cell membrane. The protein resides in the endosome membrane. The protein localises to the cytoplasmic vesicle. It localises to the autophagosome membrane. In terms of biological role, modulator of macroautophagy that causes accumulation of autophagosomes under basal conditions and enhances autophagic flux. Represses cell death and promotes long-term clonogenic survival of cells grown in the absence of glucose in a macroautophagy-independent manner. May have some role in extracellular matrix engulfment or growth factor receptor recycling, both of which can modulate cell survival. This chain is Modulator of macroautophagy TMEM150B, found in Danio rerio (Zebrafish).